The sequence spans 224 residues: Glutathione S-transferase U4 (224 aa).

One can recognise a GST N-terminal domain in the interval 6–85 (EDVKLLGFWA…YIDQIWKNNP (80 aa)). Residues 16-17 (SP), 42-43 (NK), 56-57 (KV), and 69-70 (ES) each bind glutathione. Residues 90 to 217 (DPYEKAMALF…EEQIEHMKKV (128 aa)) form the GST C-terminal domain. Threonine 151 is subject to Phosphothreonine.

Belongs to the GST superfamily. Tau family.

The protein localises to the cytoplasm. It localises to the cytosol. The enzyme catalyses RX + glutathione = an S-substituted glutathione + a halide anion + H(+). May be involved in the conjugation of reduced glutathione to a wide number of exogenous and endogenous hydrophobic electrophiles and have a detoxification role against certain herbicides. This is Glutathione S-transferase U4 (GSTU4) from Arabidopsis thaliana (Mouse-ear cress).